The following is a 404-amino-acid chain: Glucose-1-phosphate adenylyltransferase (404 aa).

Alpha-D-glucose 1-phosphate is bound by residues Tyr-99, Gly-164, Glu-179–Lys-180, and Ser-197.

The protein belongs to the bacterial/plant glucose-1-phosphate adenylyltransferase family.

It catalyses the reaction alpha-D-glucose 1-phosphate + ATP + H(+) = ADP-alpha-D-glucose + diphosphate. It functions in the pathway capsule biogenesis; capsule polysaccharide biosynthesis. The protein operates within glycan biosynthesis; glycogen biosynthesis. Its function is as follows. Involved in the biosynthesis of ADP-glucose, a building block, required in the biosynthesis of maltose-1-phosphate (M1P) and in the elongation reactions to produce linear alpha-1,4-glucans. Catalyzes the reaction between ATP and alpha-D-glucose 1-phosphate (G1P) to produce pyrophosphate and ADP-Glc. This chain is Glucose-1-phosphate adenylyltransferase, found in Mycobacterium bovis (strain ATCC BAA-935 / AF2122/97).